The primary structure comprises 448 residues: MGKYFGTDGVRGVANSELTPELAFKVGRFGGYVLTKDKQRPKVLIGRDTRISGHMLEGALVAGLLSIGAEVMRLGVISTPGVSYLTKAMDAEAGVMISASHNPVQDNGIKFFGGDGFKLSDEQEAEIERLMDEPEDKLPRPVGADLGLVNDYFEGGQKYLQFLKQTADEDFTGIHVALDCANGATSSLATHLFADLDADVSTMGTSPNGLNINDGVGSTHPEALSAFVKEKNADLGLAFDGDGDRLIAVDEKGNIVDGDQIMYICSKHLKSEGRLKDDTVVSTVMSNLGFYKALEKEGIKSVQTAVGDRYVVEAMKKDGYNVGGEQSGHLIFLDYNTTGDGLLSAIMLMNTLKATGKPLSELAAEMQKFPQLLVNVRVTDKYKVEENEKVKAVISEVEKEMNGDGRILVRPSGTEPLVRVMAEAKTKELCDEYVNRIVEVVRSEMGLE.

Catalysis depends on serine 100, which acts as the Phosphoserine intermediate. Mg(2+) contacts are provided by serine 100, aspartate 240, aspartate 242, and aspartate 244. The residue at position 100 (serine 100) is a Phosphoserine.

Belongs to the phosphohexose mutase family. In terms of assembly, homodimer, may form a complex with CdaA. It depends on Mg(2+) as a cofactor. Post-translationally, activated by phosphorylation.

It carries out the reaction alpha-D-glucosamine 1-phosphate = D-glucosamine 6-phosphate. Its function is as follows. Catalyzes the conversion of glucosamine-6-phosphate to glucosamine-1-phosphate. Glucosamine-1-phosphate is used for cell wall biosynthesis. The sequence is that of Phosphoglucosamine mutase from Bacillus subtilis (strain 168).